The sequence spans 753 residues: Polyribonucleotide nucleotidyltransferase (753 aa).

Residues Asp-488 and Asp-494 each contribute to the Mg(2+) site. In terms of domain architecture, KH spans 555-614 (PRLLRTKISPDKIGALIGPGGKNIRGIQETTGAVIEVDDEGTVLVASSNKESAQEAMRQV). One can recognise an S1 motif domain in the interval 624–692 (GKIYDGTVSS…EHDRVKLSRR (69 aa)). Residues 698-719 (LGEEDPLAVEGEGGGDSEGGGD) show a composition bias toward acidic residues. The tract at residues 698–753 (LGEEDPLAVEGEGGGDSEGGGDGEDRPRRRRGGSGGGGGGGRGRGPRRSGGGRDRD) is disordered. The span at 730-740 (GSGGGGGGGRG) shows a compositional bias: gly residues.

Belongs to the polyribonucleotide nucleotidyltransferase family. Mg(2+) serves as cofactor.

Its subcellular location is the cytoplasm. It catalyses the reaction RNA(n+1) + phosphate = RNA(n) + a ribonucleoside 5'-diphosphate. Its function is as follows. Involved in mRNA degradation. Catalyzes the phosphorolysis of single-stranded polyribonucleotides processively in the 3'- to 5'-direction. In Rhodopirellula baltica (strain DSM 10527 / NCIMB 13988 / SH1), this protein is Polyribonucleotide nucleotidyltransferase.